A 272-amino-acid polypeptide reads, in one-letter code: Putative phosphoenolpyruvate synthase regulatory protein (272 aa).

ADP is bound at residue Gly152 to Thr159.

This sequence belongs to the pyruvate, phosphate/water dikinase regulatory protein family. PSRP subfamily.

It catalyses the reaction [pyruvate, water dikinase] + ADP = [pyruvate, water dikinase]-phosphate + AMP + H(+). The catalysed reaction is [pyruvate, water dikinase]-phosphate + phosphate + H(+) = [pyruvate, water dikinase] + diphosphate. Bifunctional serine/threonine kinase and phosphorylase involved in the regulation of the phosphoenolpyruvate synthase (PEPS) by catalyzing its phosphorylation/dephosphorylation. The sequence is that of Putative phosphoenolpyruvate synthase regulatory protein from Pseudomonas putida (strain W619).